The sequence spans 238 residues: Single-stranded DNA-binding protein WHY2, mitochondrial (238 aa).

The N-terminal 29 residues, 1–29 (MMKQARSLLSRSLCDQSKSLFEASTLRGF), are a transit peptide targeting the mitochondrion. The segment at 62–67 (KGKAAL) is required for ssDNA binding.

It belongs to the Whirly family. As to quaternary structure, homotetramer.

It is found in the mitochondrion. Functionally, single-stranded DNA-binding protein that associates with mitochondrial DNA and may play a role in the regulation of the gene expression machinery. Also seems to be required to prevent break-induced DNA rearrangements in the mitochondrial genome. Can bind to melt double-stranded DNA in vivo. This Arabidopsis thaliana (Mouse-ear cress) protein is Single-stranded DNA-binding protein WHY2, mitochondrial (WHY2).